The sequence spans 675 residues: UvrABC system protein B (675 aa).

Positions 32-417 (EGLSDGLAYQ…EHAGQVVEQV (386 aa)) constitute a Helicase ATP-binding domain. Position 45–52 (45–52 (GVTGSGKT)) interacts with ATP. The Beta-hairpin signature appears at 98–121 (YYDYYQPEAYVPSRDLFIEKDSAI). The region spanning 436–602 (QVDDLMSEIN…QIKKQVKDII (167 aa)) is the Helicase C-terminal domain. A UVR domain is found at 634–669 (IKEIAKLEKAMQQAARDLQFEEAAVLRDRIRNIKEN).

The protein belongs to the UvrB family. In terms of assembly, forms a heterotetramer with UvrA during the search for lesions. Interacts with UvrC in an incision complex.

Its subcellular location is the cytoplasm. Its function is as follows. The UvrABC repair system catalyzes the recognition and processing of DNA lesions. A damage recognition complex composed of 2 UvrA and 2 UvrB subunits scans DNA for abnormalities. Upon binding of the UvrA(2)B(2) complex to a putative damaged site, the DNA wraps around one UvrB monomer. DNA wrap is dependent on ATP binding by UvrB and probably causes local melting of the DNA helix, facilitating insertion of UvrB beta-hairpin between the DNA strands. Then UvrB probes one DNA strand for the presence of a lesion. If a lesion is found the UvrA subunits dissociate and the UvrB-DNA preincision complex is formed. This complex is subsequently bound by UvrC and the second UvrB is released. If no lesion is found, the DNA wraps around the other UvrB subunit that will check the other stand for damage. This is UvrABC system protein B from Neisseria gonorrhoeae.